The sequence spans 103 residues: Large ribosomal subunit protein bL21 (103 aa).

This sequence belongs to the bacterial ribosomal protein bL21 family. Part of the 50S ribosomal subunit. Contacts protein L20.

Its function is as follows. This protein binds to 23S rRNA in the presence of protein L20. This chain is Large ribosomal subunit protein bL21, found in Shewanella pealeana (strain ATCC 700345 / ANG-SQ1).